A 235-amino-acid polypeptide reads, in one-letter code: NAD(P)H-quinone oxidoreductase subunit K (235 aa).

The [4Fe-4S] cluster site is built by Cys52, Cys53, Cys117, and Cys148. Over residues 216-226 (AGAAVAPQLPV) the composition is skewed to low complexity. Residues 216-235 (AGAAVAPQLPVTEKEGRDRA) form a disordered region.

Belongs to the complex I 20 kDa subunit family. In terms of assembly, NDH-1 can be composed of about 15 different subunits; different subcomplexes with different compositions have been identified which probably have different functions. [4Fe-4S] cluster serves as cofactor.

The protein localises to the cellular thylakoid membrane. It catalyses the reaction a plastoquinone + NADH + (n+1) H(+)(in) = a plastoquinol + NAD(+) + n H(+)(out). The catalysed reaction is a plastoquinone + NADPH + (n+1) H(+)(in) = a plastoquinol + NADP(+) + n H(+)(out). Functionally, NDH-1 shuttles electrons from an unknown electron donor, via FMN and iron-sulfur (Fe-S) centers, to quinones in the respiratory and/or the photosynthetic chain. The immediate electron acceptor for the enzyme in this species is believed to be plastoquinone. Couples the redox reaction to proton translocation, and thus conserves the redox energy in a proton gradient. Cyanobacterial NDH-1 also plays a role in inorganic carbon-concentration. This chain is NAD(P)H-quinone oxidoreductase subunit K, found in Synechococcus elongatus (strain ATCC 33912 / PCC 7942 / FACHB-805) (Anacystis nidulans R2).